The primary structure comprises 718 residues: Peroxisomal bifunctional enzyme (718 aa).

The interval 2 to 280 is enoyl-CoA hydratase / isomerase; it reads ARYELVKRSV…FAQRTAEKWT (279 aa). Gly100 serves as a coordination point for substrate. The tract at residues 281–567 is 3-hydroxyacyl-CoA dehydrogenase; it reads LPSGAQWNNS…DMVCQQGRFG (287 aa). A Microbody targeting signal motif is present at residues 716–718; the sequence is SHL.

The protein in the N-terminal section; belongs to the enoyl-CoA hydratase/isomerase family. In the C-terminal section; belongs to the 3-hydroxyacyl-CoA dehydrogenase family. In terms of assembly, monomer.

Its subcellular location is the peroxisome. It carries out the reaction a (3S)-3-hydroxyacyl-CoA = a (2E)-enoyl-CoA + H2O. The enzyme catalyses a 4-saturated-(3S)-3-hydroxyacyl-CoA = a (3E)-enoyl-CoA + H2O. The catalysed reaction is a (3Z)-enoyl-CoA = a 4-saturated (2E)-enoyl-CoA. It catalyses the reaction a (3E)-enoyl-CoA = a 4-saturated (2E)-enoyl-CoA. It carries out the reaction a (3S)-3-hydroxyacyl-CoA + NAD(+) = a 3-oxoacyl-CoA + NADH + H(+). The enzyme catalyses (2S,3S)-3-hydroxy-2-methylbutanoyl-CoA = (2E)-2-methylbut-2-enoyl-CoA + H2O. The catalysed reaction is (3S)-hydroxyhexadecanoyl-CoA + NAD(+) = 3-oxohexadecanoyl-CoA + NADH + H(+). It catalyses the reaction (3S)-hydroxyhexadecanoyl-CoA = (2E)-hexadecenoyl-CoA + H2O. It carries out the reaction (2E)-hexadecenedioyl-CoA + H2O = (3S)-hydroxyhexadecanedioyl-CoA. The enzyme catalyses (3S)-hydroxyhexadecanedioyl-CoA + NAD(+) = 3-oxohexadecanedioyl-CoA + NADH + H(+). The catalysed reaction is (3E,5Z)-tetradecadienoyl-CoA = (2E,5Z)-tetradecadienoyl-CoA. It catalyses the reaction (3E,5Z)-octadienoyl-CoA = (2E,5Z)-octadienoyl-CoA. It carries out the reaction (3S)-hydroxydecanoyl-CoA + NAD(+) = 3-oxodecanoyl-CoA + NADH + H(+). The enzyme catalyses (3E)-decenoyl-CoA = (2E)-decenoyl-CoA. The catalysed reaction is (3Z)-hexenoyl-CoA = (2E)-hexenoyl-CoA. It catalyses the reaction (3E)-hexenoyl-CoA = (2E)-hexenoyl-CoA. It carries out the reaction (3S)-hydroxydecanoyl-CoA = (2E)-decenoyl-CoA + H2O. The enzyme catalyses (3S)-hydroxyhexanoyl-CoA = (2E)-hexenoyl-CoA + H2O. Its pathway is lipid metabolism; fatty acid beta-oxidation. Its function is as follows. Peroxisomal trifunctional enzyme possessing 2-enoyl-CoA hydratase, 3-hydroxyacyl-CoA dehydrogenase, and delta 3, delta 2-enoyl-CoA isomerase activities. Catalyzes two of the four reactions of the long straight chain fatty acids peroxisomal beta-oxidation pathway. Can also use branched-chain fatty acids such as 2-methyl-2E-butenoyl-CoA as a substrate, which is hydrated into (2S,3S)-3-hydroxy-2-methylbutanoyl-CoA. Optimal isomerase for 2,5 double bonds into 3,5 form isomerization in a range of enoyl-CoA species. Also able to isomerize both 3-cis and 3-trans double bonds into the 2-trans form in a range of enoyl-CoA species. Regulates the amount of medium-chain dicarboxylic fatty acids which are essential regulators of all fatty acid oxidation pathways. Also involved in the degradation of long-chain dicarboxylic acids through peroxisomal beta-oxidation. In Danio rerio (Zebrafish), this protein is Peroxisomal bifunctional enzyme (ehhadh).